The primary structure comprises 512 residues: Probable pectinesterase/pectinesterase inhibitor 54 (512 aa).

The first 24 residues, 1-24, serve as a signal peptide directing secretion; the sequence is MGVIDMVLFWVLLVNALLIVDASS. The tract at residues 29–193 is pectinesterase inhibitor 54; the sequence is FAYQNEMQRH…SRLVSNSLTL (165 aa). 2 N-linked (GlcNAc...) asparagine glycosylation sites follow: N71 and N131. Positions 229-496 are pectinesterase 54; the sequence is HVVVAKDGSG…FSVVKRRNGE (268 aa). Q302 is a binding site for substrate. Residue D325 is the Proton donor; for pectinesterase activity of the active site. An intrachain disulfide couples C339 to C359. D346 (nucleophile; for pectinesterase activity) is an active-site residue. Residues R415 and W417 each contribute to the substrate site.

In the N-terminal section; belongs to the PMEI family. This sequence in the C-terminal section; belongs to the pectinesterase family. As to expression, expressed in siliques.

It localises to the secreted. The protein resides in the cell wall. The catalysed reaction is [(1-&gt;4)-alpha-D-galacturonosyl methyl ester](n) + n H2O = [(1-&gt;4)-alpha-D-galacturonosyl](n) + n methanol + n H(+). It functions in the pathway glycan metabolism; pectin degradation; 2-dehydro-3-deoxy-D-gluconate from pectin: step 1/5. Its function is as follows. Acts in the modification of cell walls via demethylesterification of cell wall pectin. This chain is Probable pectinesterase/pectinesterase inhibitor 54 (PME54), found in Arabidopsis thaliana (Mouse-ear cress).